The following is a 421-amino-acid chain: NADH-quinone oxidoreductase subunit F 2 (421 aa).

53-62 (GRGGAGFPTG) lines the NAD(+) pocket. 165 to 212 (GAGAYICGEETAMLESLEGKRAQPRLKPPFPAVAGLYASPTVINNVET) serves as a coordination point for FMN. Residues Cys342, Cys345, Cys348, and Cys388 each coordinate [4Fe-4S] cluster.

Belongs to the complex I 51 kDa subunit family. It depends on FMN as a cofactor. Requires [4Fe-4S] cluster as cofactor.

The catalysed reaction is a quinone + NADH + 5 H(+)(in) = a quinol + NAD(+) + 4 H(+)(out). In terms of biological role, NDH-1 shuttles electrons from NADH, via FMN and iron-sulfur (Fe-S) centers, to quinones in the respiratory chain. The immediate electron acceptor for the enzyme in this species is believed to be ubiquinone. Couples the redox reaction to proton translocation (for every two electrons transferred, four hydrogen ions are translocated across the cytoplasmic membrane), and thus conserves the redox energy in a proton gradient. The polypeptide is NADH-quinone oxidoreductase subunit F 2 (nuoF2) (Rhizobium meliloti (strain 1021) (Ensifer meliloti)).